A 119-amino-acid chain; its full sequence is 5-hydroxyisourate hydrolase (119 aa).

Residues His-8, Arg-47, and Tyr-116 each contribute to the substrate site.

It belongs to the transthyretin family. 5-hydroxyisourate hydrolase subfamily. Homotetramer.

The catalysed reaction is 5-hydroxyisourate + H2O = 5-hydroxy-2-oxo-4-ureido-2,5-dihydro-1H-imidazole-5-carboxylate + H(+). It functions in the pathway purine metabolism; urate degradation; (S)-allantoin from urate: step 2/3. Its function is as follows. Catalyzes the hydrolysis of 5-hydroxyisourate (HIU) to 2-oxo-4-hydroxy-4-carboxy-5-ureidoimidazoline (OHCU). In Halalkalibacterium halodurans (strain ATCC BAA-125 / DSM 18197 / FERM 7344 / JCM 9153 / C-125) (Bacillus halodurans), this protein is 5-hydroxyisourate hydrolase.